A 289-amino-acid chain; its full sequence is Release factor glutamine methyltransferase (289 aa).

S-adenosyl-L-methionine contacts are provided by residues 130 to 134 (GTGTG), Asp153, Trp182, and Asn196. 196–199 (NPPY) provides a ligand contact to substrate.

Belongs to the protein N5-glutamine methyltransferase family. PrmC subfamily.

The enzyme catalyses L-glutaminyl-[peptide chain release factor] + S-adenosyl-L-methionine = N(5)-methyl-L-glutaminyl-[peptide chain release factor] + S-adenosyl-L-homocysteine + H(+). In terms of biological role, methylates the class 1 translation termination release factors RF1/PrfA and RF2/PrfB on the glutamine residue of the universally conserved GGQ motif. The polypeptide is Release factor glutamine methyltransferase (Agrobacterium fabrum (strain C58 / ATCC 33970) (Agrobacterium tumefaciens (strain C58))).